The primary structure comprises 397 residues: Cysteine desulfurase IscS (397 aa).

Residues 72–73 (GS), Asn-152, Gln-180, and 200–202 (SAH) contribute to the pyridoxal 5'-phosphate site. Position 203 is an N6-(pyridoxal phosphate)lysine (Lys-203). Residue Thr-238 participates in pyridoxal 5'-phosphate binding. Cys-328 acts as the Cysteine persulfide intermediate in catalysis. Cys-328 provides a ligand contact to [2Fe-2S] cluster.

Belongs to the class-V pyridoxal-phosphate-dependent aminotransferase family. NifS/IscS subfamily. As to quaternary structure, homodimer. Forms a heterotetramer with IscU, interacts with other sulfur acceptors. Requires pyridoxal 5'-phosphate as cofactor.

It localises to the cytoplasm. It catalyses the reaction (sulfur carrier)-H + L-cysteine = (sulfur carrier)-SH + L-alanine. Its pathway is cofactor biosynthesis; iron-sulfur cluster biosynthesis. In terms of biological role, master enzyme that delivers sulfur to a number of partners involved in Fe-S cluster assembly, tRNA modification or cofactor biosynthesis. Catalyzes the removal of elemental sulfur atoms from cysteine to produce alanine. Functions as a sulfur delivery protein for Fe-S cluster synthesis onto IscU, an Fe-S scaffold assembly protein, as well as other S acceptor proteins. In Clostridium botulinum (strain ATCC 19397 / Type A), this protein is Cysteine desulfurase IscS.